We begin with the raw amino-acid sequence, 463 residues long: Probable transport protein HsrA (463 aa).

A run of 14 helical transmembrane segments spans residues 10–30 (GLAW…TILN), 49–69 (MAII…AWAA), 82–102 (VFTF…ESLI), 107–127 (IQGI…IQAV), 139–159 (MATA…WLVI), 165–185 (WIFL…GSVM), 197–217 (WTGF…LDLL), 225–245 (SVTY…CGYA), 267–287 (IIAN…LPLM), 298–318 (MSGW…ILIG), 328–348 (TTLI…AWLD), 354–374 (TWII…FTSI), 393–413 (VLSI…SIIL), and 429–449 (AFSY…WSLM).

Belongs to the major facilitator superfamily. EmrB family.

Its subcellular location is the cell inner membrane. This Haemophilus influenzae (strain ATCC 51907 / DSM 11121 / KW20 / Rd) protein is Probable transport protein HsrA (hsrA).